The primary structure comprises 420 residues: Histidine--tRNA ligase (420 aa).

The protein belongs to the class-II aminoacyl-tRNA synthetase family. Homodimer.

Its subcellular location is the cytoplasm. The enzyme catalyses tRNA(His) + L-histidine + ATP = L-histidyl-tRNA(His) + AMP + diphosphate + H(+). This chain is Histidine--tRNA ligase, found in Ureaplasma parvum serovar 3 (strain ATCC 27815 / 27 / NCTC 11736).